Consider the following 721-residue polypeptide: MQGQTQSISFDGREIRLTTGRYAPQAGGSVMIECGDTSVLVTATRSSGREGIDFLPLICDYEERLYAAGRIPGSFMRREGRPPERATLISRLIDRPMRPLFPSWLRDDLQIVATCMSLDERVPADVLSVTGASMATLLAGIPFYGPMAAVRVGLLGDDFVLNPSYREIERGDLDLVVAGTPEGIVMVEAGANQLPEQDVIEAIDFGYEAVCELIKAQESILKDAGIEQVKPEQPEEDSTLPVYLEKACTKAIGEVLSQFDQSKADRDSKLDAIRSSTAETIEALKDSDPVRKLVSANSKALPTSFKALTKKLMRQQIVKDGKRVDGRSLDQVRPISAAAGVLPKRVHGSGLFQRGLTQVLSTATLGTPSDAQEMDDLNPSTEKTYLHHYNFPPYSVGETKPMRSPGRREIGHGALAERAILPVLPAKDTFPYVVRVVSEVLSSNGSTSMGSVCGSTLALMDAGVPLKAPVSGAAMGLIKEGDEVRILTDIQGIEDFLGDMDFKVAGTDKGITALQMDMKITGLAMGTIAEAINQARPARLHILEKMMEAIDTPRDGLSPHAPRLLSFRIDPELIGTVIGPGGRTIKGITERTNTKIDIEDSGIVTIASHDGAAADEAQKIIEGLTRKVNEGEVFSGAITRIIPIGAFVEILPGKEGMIHISQLSEARVEKVEDVVKVGDEVTVRVREIDNRGRINLTLRGVPQNGEEAEPAPAPTPVAPLN.

Asp495 and Asp501 together coordinate Mg(2+). In terms of domain architecture, KH spans 562–621; that stretch reads PRLLSFRIDPELIGTVIGPGGRTIKGITERTNTKIDIEDSGIVTIASHDGAAADEAQKII. The region spanning 631–699 is the S1 motif domain; that stretch reads GEVFSGAITR…NRGRINLTLR (69 aa). The segment at 700–721 is disordered; sequence GVPQNGEEAEPAPAPTPVAPLN. A compositionally biased stretch (pro residues) spans 711-721; sequence APAPTPVAPLN.

Belongs to the polyribonucleotide nucleotidyltransferase family. The cofactor is Mg(2+).

The protein localises to the cytoplasm. It carries out the reaction RNA(n+1) + phosphate = RNA(n) + a ribonucleoside 5'-diphosphate. Its function is as follows. Involved in mRNA degradation. Catalyzes the phosphorolysis of single-stranded polyribonucleotides processively in the 3'- to 5'-direction. The sequence is that of Polyribonucleotide nucleotidyltransferase from Synechococcus sp. (strain WH7803).